A 202-amino-acid polypeptide reads, in one-letter code: Putative 3-methyladenine DNA glycosylase (202 aa).

Belongs to the DNA glycosylase MPG family.

The protein is Putative 3-methyladenine DNA glycosylase of Rhodopseudomonas palustris (strain BisB5).